A 235-amino-acid chain; its full sequence is tRNA pseudouridine synthase B (235 aa).

The active-site Nucleophile is the Asp-48.

It belongs to the pseudouridine synthase TruB family. Type 1 subfamily.

The catalysed reaction is uridine(55) in tRNA = pseudouridine(55) in tRNA. In terms of biological role, responsible for synthesis of pseudouridine from uracil-55 in the psi GC loop of transfer RNAs. The sequence is that of tRNA pseudouridine synthase B from Parabacteroides distasonis (strain ATCC 8503 / DSM 20701 / CIP 104284 / JCM 5825 / NCTC 11152).